The sequence spans 454 residues: uncharacterized protein (454 aa).

The N-terminal stretch at 1-18 (MRRFTLFVFFLSISIAYA) is a signal peptide.

This is an uncharacterized protein from Caenorhabditis elegans.